A 402-amino-acid polypeptide reads, in one-letter code: uncharacterized protein (402 aa).

A run of 11 helical transmembrane segments spans residues 12–32 (FWLITGIIFIAFNLRPAITSV), 48–68 (GAAGFLTALPLLSFAVLSPLA), 80–100 (TLWLGLVILLIGVLTRSTGYT), 101–121 (AALFFGTALIGVGIAIGNVLL), 134–154 (GIMISLYTTSMNIFAALASGV), 168–188 (QAFLLWGGLALLALLIWIPQL), 212–232 (WYVTIFMGLQSFLFYSSIAWF), 248–268 (WMVSLMQFASLPSTFLTPVLA), 291–311 (GLLAGGSHTLLAIWMIIIGIG), 339–359 (MSQSFGYLLAAVGPIFVGYLF), and 367–387 (MPIVLLIAALIVMGAAGQGAG).

This sequence belongs to the major facilitator superfamily. Cyanate porter (TC 2.A.1.17) family.

The protein resides in the cell membrane. This is an uncharacterized protein from Bacillus subtilis (strain 168).